The chain runs to 160 residues: Ribosomal RNA large subunit methyltransferase H (160 aa).

Residues L76, G108, and 127 to 132 (LGKMTW) contribute to the S-adenosyl-L-methionine site.

This sequence belongs to the RNA methyltransferase RlmH family. As to quaternary structure, homodimer.

The protein resides in the cytoplasm. It carries out the reaction pseudouridine(1915) in 23S rRNA + S-adenosyl-L-methionine = N(3)-methylpseudouridine(1915) in 23S rRNA + S-adenosyl-L-homocysteine + H(+). Functionally, specifically methylates the pseudouridine at position 1915 (m3Psi1915) in 23S rRNA. The polypeptide is Ribosomal RNA large subunit methyltransferase H (Rhizobium meliloti (strain 1021) (Ensifer meliloti)).